Consider the following 137-residue polypeptide: Holo-[acyl-carrier-protein] synthase (137 aa).

The Mg(2+) site is built by D8 and E57.

Belongs to the P-Pant transferase superfamily. AcpS family. It depends on Mg(2+) as a cofactor.

The protein localises to the cytoplasm. It carries out the reaction apo-[ACP] + CoA = holo-[ACP] + adenosine 3',5'-bisphosphate + H(+). In terms of biological role, transfers the 4'-phosphopantetheine moiety from coenzyme A to a Ser of acyl-carrier-protein. This Mesorhizobium japonicum (strain LMG 29417 / CECT 9101 / MAFF 303099) (Mesorhizobium loti (strain MAFF 303099)) protein is Holo-[acyl-carrier-protein] synthase.